A 426-amino-acid chain; its full sequence is Glutamate-1-semialdehyde 2,1-aminomutase (426 aa).

Lys-263 carries the N6-(pyridoxal phosphate)lysine modification.

Belongs to the class-III pyridoxal-phosphate-dependent aminotransferase family. HemL subfamily. Homodimer. Requires pyridoxal 5'-phosphate as cofactor.

It is found in the cytoplasm. It carries out the reaction (S)-4-amino-5-oxopentanoate = 5-aminolevulinate. It functions in the pathway porphyrin-containing compound metabolism; protoporphyrin-IX biosynthesis; 5-aminolevulinate from L-glutamyl-tRNA(Glu): step 2/2. This chain is Glutamate-1-semialdehyde 2,1-aminomutase, found in Dichelobacter nodosus (strain VCS1703A).